Reading from the N-terminus, the 293-residue chain is Ethanolamine ammonia-lyase small subunit (293 aa).

2 residues coordinate adenosylcob(III)alamin: Val207 and Glu228.

The protein belongs to the EutC family. The basic unit is a heterodimer which dimerizes to form tetramers. The heterotetramers trimerize; 6 large subunits form a core ring with 6 small subunits projecting outwards. Adenosylcob(III)alamin is required as a cofactor.

The protein localises to the bacterial microcompartment. It catalyses the reaction ethanolamine = acetaldehyde + NH4(+). It participates in amine and polyamine degradation; ethanolamine degradation. Its function is as follows. Catalyzes the deamination of various vicinal amino-alcohols to oxo compounds. Allows this organism to utilize ethanolamine as the sole source of nitrogen and carbon in the presence of external vitamin B12. In Listeria monocytogenes serotype 4b (strain CLIP80459), this protein is Ethanolamine ammonia-lyase small subunit.